We begin with the raw amino-acid sequence, 403 residues long: Tryptophan synthase beta chain (403 aa).

Lysine 96 bears the N6-(pyridoxal phosphate)lysine mark.

Belongs to the TrpB family. As to quaternary structure, tetramer of two alpha and two beta chains. Requires pyridoxal 5'-phosphate as cofactor.

It carries out the reaction (1S,2R)-1-C-(indol-3-yl)glycerol 3-phosphate + L-serine = D-glyceraldehyde 3-phosphate + L-tryptophan + H2O. It participates in amino-acid biosynthesis; L-tryptophan biosynthesis; L-tryptophan from chorismate: step 5/5. Functionally, the beta subunit is responsible for the synthesis of L-tryptophan from indole and L-serine. This is Tryptophan synthase beta chain from Ralstonia nicotianae (strain ATCC BAA-1114 / GMI1000) (Ralstonia solanacearum).